The chain runs to 78 residues: Consomatin Nc1 (78 aa).

Positions 1–22 are cleaved as a signal peptide; that stretch reads MQTAYWVMVMVMVWITAPLSEG. A propeptide spanning residues 23 to 59 is cleaved from the precursor; that stretch reads GKPNDVIRGLVPDDLTPQLILRSLISRRRSDKDVGKR. A 4-carboxyglutamate modification is found at Glu61. Cysteines 62 and 67 form a disulfide. Residue Trp64 is modified to D-tryptophan. The residue at position 70 (Pro70) is a 4-hydroxyproline. A propeptide spanning residues 71–78 is cleaved from the precursor; that stretch reads LSRRHDLG.

Belongs to the conotoxin C superfamily. Consomatin family. Expressed by the venom duct.

Its subcellular location is the secreted. Functionally, moderately activates human somatostatin receptors (SSTR) with a preferential activation of SSTR1 and SSTR4. In vivo, does not cause behavioral changes in mice within a few minutes of intracranial injection, but causes a progressive loss of movement thereafter. Four to five hours after injection, mice recover, even with the highest dose tested. Shows antinociception and antihyperalgesia activities in two mouse models of acute pain, most probably by acting outside the central nervous system. The protein is Consomatin Nc1 of Conus neocostatus (Cone snail).